The sequence spans 427 residues: Adenylosuccinate synthetase (427 aa).

GTP is bound by residues 12-18 (GDEGKGK) and 40-42 (GHT). Asp13 functions as the Proton acceptor in the catalytic mechanism. Residues Asp13 and Gly40 each contribute to the Mg(2+) site. IMP-binding positions include 13 to 16 (DEGK), 38 to 41 (NAGH), Thr128, Arg142, Gln223, Thr238, and Arg302. His41 (proton donor) is an active-site residue. 298–304 (TTTGRNR) serves as a coordination point for substrate. Residues Arg304, 330–332 (KLD), and 412–414 (GVG) each bind GTP.

Belongs to the adenylosuccinate synthetase family. In terms of assembly, homodimer. The cofactor is Mg(2+).

The protein resides in the cytoplasm. It catalyses the reaction IMP + L-aspartate + GTP = N(6)-(1,2-dicarboxyethyl)-AMP + GDP + phosphate + 2 H(+). The protein operates within purine metabolism; AMP biosynthesis via de novo pathway; AMP from IMP: step 1/2. Plays an important role in the de novo pathway of purine nucleotide biosynthesis. Catalyzes the first committed step in the biosynthesis of AMP from IMP. This chain is Adenylosuccinate synthetase, found in Thermobifida fusca (strain YX).